The chain runs to 610 residues: Protein SAN1 (610 aa).

Over residues 1–10 (MSESGQEQNR) the composition is skewed to polar residues. Disordered stretches follow at residues 1 to 36 (MSESGQEQNRGTNTSPNNAENNNNSNAASGPLNGGA) and 176 to 231 (VDST…PSIP). Low complexity predominate over residues 11–36 (GTNTSPNNAENNNNSNAASGPLNGGA). The span at 194-203 (EGTKKRKDNE) shows a compositional bias: basic and acidic residues. Residues 210 to 223 (TADNDSNPSITNAT) show a composition bias toward polar residues. The segment at 240-280 (NDEETNPSYKHSPIKLPCGHIFGRECIYKWSRLENSCPLCR) adopts an RING-type zinc-finger fold. Disordered regions lie at residues 318–348 (TAVNSTNENSSAPSENTSNTTVPTIGNASSG), 360–453 (VPQN…TDPH), 471–502 (GTSDTSATTAPGAQTVHNQGRNDSSSSDTTQG), 514–554 (GHFT…GVAS), and 569–610 (NNNS…RSSQ). Positions 319-348 (AVNSTNENSSAPSENTSNTTVPTIGNASSG) are enriched in polar residues. 2 stretches are compositionally biased toward low complexity: residues 384-406 (NGPSSTTQNPPSNSGGSNNNQSP) and 425-447 (PSASDSSASPSAANGPNSNNTSS). Over residues 471-492 (GTSDTSATTAPGAQTVHNQGRN) the composition is skewed to polar residues. Residues 493–502 (DSSSSDTTQG) show a composition bias toward low complexity. 2 stretches are compositionally biased toward polar residues: residues 533–554 (QQRGGSTGENNRNNLFSSGVAS) and 592–610 (DTTIHNDVPNDNNEQRSSQ).

Plays a specific role in mating-type regulation of yeast, by acting post-translationally to control the stability or activity of the SIR4 proteins. In Saccharomyces cerevisiae (strain ATCC 204508 / S288c) (Baker's yeast), this protein is Protein SAN1 (SAN1).